The sequence spans 436 residues: AMSH-like protease (436 aa).

M1 is modified (N-acetylmethionine). S25 and S242 each carry phosphoserine. Residues 269 to 397 form the MPN domain; the sequence is VVLPEDLCHK…IFRLTNAGML (129 aa). Residues H347, H349, D360, H362, C402, H408, and H410 each contribute to the Zn(2+) site. The short motif at 347-360 is the JAMM motif element; it reads HTHPTQTAFLSSVD.

This sequence belongs to the peptidase M67C family. Zn(2+) is required as a cofactor. In terms of tissue distribution, ubiquitously expressed.

Inhibited by UbV(SP.1), an ubiquitin variant that also inhibits STAMBP. In terms of biological role, zinc metalloprotease that specifically cleaves 'Lys-63'-linked polyubiquitin chains. Acts as a positive regulator of the TORC1 signaling pathway by mediating 'Lys-63'-linked deubiquitination of SESN2, thereby inhibiting SESN2-interaction with the GATOR2 complex. Does not cleave 'Lys-48'-linked polyubiquitin chains. The sequence is that of AMSH-like protease from Homo sapiens (Human).